A 230-amino-acid polypeptide reads, in one-letter code: Dephospho-CoA kinase (230 aa).

The interval 1 to 20 (MSKYAAIPSPYSHQPQAPDH) is disordered. In terms of domain architecture, DPCK spans 26–225 (VVGLTGGIGS…QDYLKLAQQL (200 aa)). An ATP-binding site is contributed by 34–39 (GSGKSA).

It belongs to the CoaE family.

It localises to the cytoplasm. The catalysed reaction is 3'-dephospho-CoA + ATP = ADP + CoA + H(+). It participates in cofactor biosynthesis; coenzyme A biosynthesis; CoA from (R)-pantothenate: step 5/5. Catalyzes the phosphorylation of the 3'-hydroxyl group of dephosphocoenzyme A to form coenzyme A. The sequence is that of Dephospho-CoA kinase from Psychrobacter arcticus (strain DSM 17307 / VKM B-2377 / 273-4).